Reading from the N-terminus, the 230-residue chain is Sperm-associated antigen 7 homolog (230 aa).

The segment at 1-45 (MADLLGSILSSMEKPPTVHDQESRRKAREQAARLKKLEEDERRKK) is disordered. A compositionally biased stretch (basic and acidic residues) spans 16 to 45 (PTVHDQESRRKAREQAARLKKLEEDERRKK). In terms of domain architecture, R3H spans 46-109 (AEFRKKMEKE…ESRYVMLFKK (64 aa)). A compositionally biased stretch (basic and acidic residues) spans 119 to 144 (EAYRKGEEWDPQKAEERRRLKEKAAL). Disordered stretches follow at residues 119–169 (EAYR…KYSH) and 185–230 (ANRA…GSSV). At S158 the chain carries Phosphoserine. Over residues 196 to 211 (NKRDTRSIEEAMNEIR) the composition is skewed to basic and acidic residues.

In Danio rerio (Zebrafish), this protein is Sperm-associated antigen 7 homolog (spag7).